Here is a 49-residue protein sequence, read N- to C-terminus: Large ribosomal subunit protein bL33C (49 aa).

This sequence belongs to the bacterial ribosomal protein bL33 family.

The chain is Large ribosomal subunit protein bL33C from Bacillus pumilus (strain SAFR-032).